The sequence spans 504 residues: ATP synthase subunit alpha (504 aa).

An ATP-binding site is contributed by 169-176 (GDRQTGKT).

This sequence belongs to the ATPase alpha/beta chains family. In terms of assembly, F-type ATPases have 2 components, CF(1) - the catalytic core - and CF(0) - the membrane proton channel. CF(1) has five subunits: alpha(3), beta(3), gamma(1), delta(1), epsilon(1). CF(0) has three main subunits: a(1), b(2) and c(9-12). The alpha and beta chains form an alternating ring which encloses part of the gamma chain. CF(1) is attached to CF(0) by a central stalk formed by the gamma and epsilon chains, while a peripheral stalk is formed by the delta and b chains.

It localises to the cell membrane. It catalyses the reaction ATP + H2O + 4 H(+)(in) = ADP + phosphate + 5 H(+)(out). In terms of biological role, produces ATP from ADP in the presence of a proton gradient across the membrane. The alpha chain is a regulatory subunit. This chain is ATP synthase subunit alpha, found in Clostridium botulinum (strain ATCC 19397 / Type A).